We begin with the raw amino-acid sequence, 84 residues long: Small ribosomal subunit protein bS20 (84 aa).

Belongs to the bacterial ribosomal protein bS20 family.

In terms of biological role, binds directly to 16S ribosomal RNA. In Limosilactobacillus reuteri (strain DSM 20016) (Lactobacillus reuteri), this protein is Small ribosomal subunit protein bS20.